We begin with the raw amino-acid sequence, 459 residues long: 23S rRNA (uracil-C(5))-methyltransferase RlmCD (459 aa).

In terms of domain architecture, TRAM spans Pro6 to Glu64. Positions 77, 83, 86, and 166 each coordinate [4Fe-4S] cluster. Residues Gln290, Tyr319, Glu340, and Asp388 each contribute to the S-adenosyl-L-methionine site. Cys415 (nucleophile) is an active-site residue.

Belongs to the class I-like SAM-binding methyltransferase superfamily. RNA M5U methyltransferase family.

The enzyme catalyses uridine(747) in 23S rRNA + S-adenosyl-L-methionine = 5-methyluridine(747) in 23S rRNA + S-adenosyl-L-homocysteine + H(+). It carries out the reaction uridine(1939) in 23S rRNA + S-adenosyl-L-methionine = 5-methyluridine(1939) in 23S rRNA + S-adenosyl-L-homocysteine + H(+). Catalyzes the formation of 5-methyl-uridine at positions 747 (m5U747) and 1939 (m5U1939) in 23S rRNA. This Bacillus subtilis (strain 168) protein is 23S rRNA (uracil-C(5))-methyltransferase RlmCD (rlmCD).